A 937-amino-acid polypeptide reads, in one-letter code: Aconitate hydratase A (937 aa).

3 residues coordinate [4Fe-4S] cluster: Cys-439, Cys-505, and Cys-508. Residues 898 to 921 (KKESKSTQSTTSKGCGSADTSSET) are disordered.

This sequence belongs to the aconitase/IPM isomerase family. As to quaternary structure, monomer. [4Fe-4S] cluster is required as a cofactor.

It carries out the reaction citrate = D-threo-isocitrate. The enzyme catalyses (2S,3R)-3-hydroxybutane-1,2,3-tricarboxylate = 2-methyl-cis-aconitate + H2O. It functions in the pathway carbohydrate metabolism; tricarboxylic acid cycle; isocitrate from oxaloacetate: step 2/2. Its pathway is organic acid metabolism; propanoate degradation. Its function is as follows. Involved in the catabolism of short chain fatty acids (SCFA) via the tricarboxylic acid (TCA)(acetyl degradation route) and probably the 2-methylcitrate cycle I (propionate degradation route). Catalyzes the reversible isomerization of citrate to isocitrate via cis-aconitate. Could catalyze the hydration of 2-methyl-cis-aconitate to yield (2R,3S)-2-methylisocitrate. The apo form of AcnA functions as a RNA-binding regulatory protein. This is Aconitate hydratase A (acn) from Francisella tularensis subsp. holarctica (strain LVS).